The following is a 149-amino-acid chain: Arginine repressor (149 aa).

The protein belongs to the ArgR family. In terms of assembly, homohexamer.

The protein localises to the cytoplasm. The protein operates within amino-acid biosynthesis; L-arginine biosynthesis [regulation]. In terms of biological role, regulates arginine biosynthesis genes. This is Arginine repressor (argR) from Geobacillus stearothermophilus (Bacillus stearothermophilus).